Here is a 551-residue protein sequence, read N- to C-terminus: HTH-type transcriptional regulator SgrR (551 aa).

Residues 1 to 116 (MPSARLQQQF…LVSHLGRSFR (116 aa)) form the HTH marR-type domain. Residues 26–49 (LNELAALLSCSRRHMRTLLNTMQD) constitute a DNA-binding region (H-T-H motif). Positions 163–492 (ELEADIAHHW…IDWQADAARW (330 aa)) are solute-binding.

In terms of biological role, activates the small RNA gene sgrS under glucose-phosphate stress conditions as well as yfdZ. Represses its own transcription under both stress and non-stress conditions. Might act as a sensor of the intracellular accumulation of phosphoglucose by binding these molecules in its C-terminal solute-binding domain. This Shigella sonnei (strain Ss046) protein is HTH-type transcriptional regulator SgrR.